The sequence spans 569 residues: Putative diguanylate cyclase DgcQ (569 aa).

A run of 2 helical transmembrane segments spans residues 25 to 45 and 365 to 385; these read LGPGHVVNLCFIVVLLFSTLL and IALTLLWALFTTMLLLSWYVI. The GGDEF domain occupies 433-568; it reads HPFSVIQVDL…GRNRVFASDN (136 aa). Position 441 (Asp441) interacts with Mg(2+). Residues Asn449, His454, and Asp458 each coordinate substrate. Glu484 is a Mg(2+) binding site. The active-site Proton acceptor is Glu484.

In terms of assembly, homodimer. It depends on Mg(2+) as a cofactor.

It localises to the cell inner membrane. It carries out the reaction 2 GTP = 3',3'-c-di-GMP + 2 diphosphate. It participates in glycan metabolism; bacterial cellulose biosynthesis. It functions in the pathway purine metabolism; 3',5'-cyclic di-GMP biosynthesis. In terms of biological role, catalyzes the synthesis of cyclic-di-GMP (c-di-GMP) via the condensation of 2 GTP molecules. Cyclic-di-GMP is a second messenger which controls cell surface-associated traits in bacteria. Involved in the regulation of cellulose production. This is Putative diguanylate cyclase DgcQ from Shigella flexneri.